Reading from the N-terminus, the 137-residue chain is MLPFMLSSFLGASPSIWPLAPAEAFQLPPCQLINQTVSLEKEGCPKCHPVETTICSGHCITKDPVMKTRYVYQHVCTYRDLHYKTFELPDCPLGVDPTVTYPVAVSCNCGLCAMDTSDCTFESLQPNFCMNDIPFYY.

The N-terminal stretch at 1-24 (MLPFMLSSFLGASPSIWPLAPAEA) is a signal peptide. Cystine bridges form between C30–C76, C44–C91, C47–C129, C55–C107, C59–C109, and C112–C119. N34 carries an N-linked (GlcNAc...) asparagine glycan.

The protein belongs to the glycoprotein hormones subunit beta family. Heterodimer of an alpha and a beta chain.

The protein localises to the secreted. Involved in gametogenesis and steroidogenesis. This Acanthopagrus latus (Yellowfin seabream) protein is Gonadotropin subunit beta-2 (cgbb).